Reading from the N-terminus, the 901-residue chain is HTH-type transcriptional regulator MalT (901 aa).

Position 39–46 (39–46 (SPAGYGKT)) interacts with ATP. Positions 829 to 894 (ELIRTSPLTQ…DAVQHAQQLL (66 aa)) constitute an HTH luxR-type domain. The H-T-H motif DNA-binding region spans 853-872 (NEQIAGELEVAATTIKTHIR).

This sequence belongs to the MalT family. As to quaternary structure, monomer in solution. Oligomerizes to an active state in the presence of the positive effectors ATP and maltotriose.

Activated by ATP and maltotriose, which are both required for DNA binding. Positively regulates the transcription of the maltose regulon whose gene products are responsible for uptake and catabolism of malto-oligosaccharides. Specifically binds to the promoter region of its target genes, recognizing a short DNA motif called the MalT box. In Escherichia fergusonii (strain ATCC 35469 / DSM 13698 / CCUG 18766 / IAM 14443 / JCM 21226 / LMG 7866 / NBRC 102419 / NCTC 12128 / CDC 0568-73), this protein is HTH-type transcriptional regulator MalT.